Consider the following 1299-residue polypeptide: MLDVTTFDELRIGLATADDIRRWSHGEVKKPETINYRTLKPEKDGLFGEQIFGPSRDWECSCGKYKRVRFKGIVCERCGVEVTKSAVRRERMGHIELAAPVTHIWYFKGVPSRLGYLLDMAPKDLEKVIYFAAYMVISVDEDARHEDMPGLENELRLEIKTLQDQRDSQIAERLGRLETDLAALEAEGAKSDQKRRAKDGAEKEMGQTRKAFDEDISRLERVWEEFRSLKVGELKPEDAVFHELQDRFGIYFEAHMGAEAIQKRLEAFDLEAEGELLREQIATGKGQKKIRAIKRLRVVSSFLATGNSPAAMVLQVVPVIPPELRPMVQLDGGRFATSDLNDLYRRVINRNNRLRRLLDLGAPEIIVNNEKRMLQEAVDALFDNGRRGRPVTGTGNRALKSLSDMLKGKQGRFRQNLLGKRVDYSGRSVIIVGPQLKLHQCGLPKQMALELFKPFVIKRLIDLSHAQNIKAAKRMVERSRGQVWDVLEEIIRERPVLLNRAPTLHRLGIQAFEPQLVEGKAIQLHPLVCAAFNADFDGDQMAVHLPLSVEAQAEARILMLASNNILKPSDGRPVTLPTQDMIIGLHHLTTLKEGVAGEGRAFSSVAEAILAKDQLSLDLNAKVRIRLHDIYFGEGEAPEGVELDEKGKTVGPVLLETTLGRALFNETLPVDYPYIEAVADKGKLSEIVNDLAERYPKVEVAAALDRIKDAGFYWATRSGVTVALSDVLTPPTKAAILSGYEKQAAKVQGQFEKGLTTNAERRQELIEIWNKATAEVAKAMEDNLPADNNINRMVSSGARGNWMQVRQIAGMRGLVSNPKGEIIPRPIVHSYREGLTVAEYFISTHGARKGLADTALRTADSGYLTRRLVDVSQDVIIREDDCGTGRGLDLPIATKGADGSSVRDSNVENSVYARSLAADAVNEAGEVVAPAGSDVGDVMIDHLIAAGVHEIKVRSVLTCESAVGVCAACYGRSLATGKLVDIGEAVGIIAAQSIGEPGTQLTMRTFHTGGVASADDITQGLPRVQELFEARTPKGASPIAEAAGRITIEDTDRSRKVILTPDNGDEPHIYPVLKRATLLVEDGQHVELGQQLHVGAIDPKEVLRVKGVREVQKHLVGGVQGVYRSQGVPIHDKHIEVIVRQMLRKVTVVEHGDTDLLPGELVDRARYNEVNRATLTEGKKTASARQEVMGITKASLATESWLSAASFQETTRVLTQAAMEGKSDPLMGLKENVIIGKLIPAGTGLAKYRDVTVTATEEAKAERYPNRIFTDESVFNESDLSFVDFDSFSSDDYTPGTYN.

Zn(2+) is bound by residues Cys60, Cys62, Cys75, and Cys78. The interval 188 to 209 (GAKSDQKRRAKDGAEKEMGQTR) is disordered. Asp535, Asp537, and Asp539 together coordinate Mg(2+). 4 residues coordinate Zn(2+): Cys882, Cys959, Cys966, and Cys969.

Belongs to the RNA polymerase beta' chain family. In terms of assembly, the RNAP catalytic core consists of 2 alpha, 1 beta, 1 beta' and 1 omega subunit. When a sigma factor is associated with the core the holoenzyme is formed, which can initiate transcription. The cofactor is Mg(2+). Requires Zn(2+) as cofactor.

It carries out the reaction RNA(n) + a ribonucleoside 5'-triphosphate = RNA(n+1) + diphosphate. Its function is as follows. DNA-dependent RNA polymerase catalyzes the transcription of DNA into RNA using the four ribonucleoside triphosphates as substrates. The sequence is that of DNA-directed RNA polymerase subunit beta' from Clavibacter michiganensis subsp. michiganensis (strain NCPPB 382).